The primary structure comprises 188 residues: Pyridoxal 5'-phosphate synthase subunit PdxT (188 aa).

Position 46–48 (46–48) interacts with L-glutamine; it reads GES. Catalysis depends on Cys-78, which acts as the Nucleophile. Residues Arg-105 and 133-134 contribute to the L-glutamine site; that span reads IR. Catalysis depends on charge relay system residues His-169 and Glu-171.

The protein belongs to the glutaminase PdxT/SNO family. As to quaternary structure, in the presence of PdxS, forms a dodecamer of heterodimers. Only shows activity in the heterodimer.

The catalysed reaction is aldehydo-D-ribose 5-phosphate + D-glyceraldehyde 3-phosphate + L-glutamine = pyridoxal 5'-phosphate + L-glutamate + phosphate + 3 H2O + H(+). It catalyses the reaction L-glutamine + H2O = L-glutamate + NH4(+). The protein operates within cofactor biosynthesis; pyridoxal 5'-phosphate biosynthesis. In terms of biological role, catalyzes the hydrolysis of glutamine to glutamate and ammonia as part of the biosynthesis of pyridoxal 5'-phosphate. The resulting ammonia molecule is channeled to the active site of PdxS. This chain is Pyridoxal 5'-phosphate synthase subunit PdxT, found in Thermosipho africanus (strain TCF52B).